The chain runs to 355 residues: UPF0421 protein BCE_2776 (355 aa).

Transmembrane regions (helical) follow at residues 19 to 39, 74 to 94, 109 to 129, and 131 to 151; these read IAVF…IFAV, FTFF…FTIV, TLTA…AFLI, and LATT…ILPP.

The protein belongs to the UPF0421 family.

It is found in the cell membrane. In Bacillus cereus (strain ATCC 10987 / NRS 248), this protein is UPF0421 protein BCE_2776.